Consider the following 732-residue polypeptide: Prolyl 3-hydroxylase 3 (732 aa).

The signal sequence occupies residues 1-19 (MLRLLRLLLLLLLPPPGSP). Positions 15 to 25 (PPGSPEPPEPP) are enriched in pro residues. A disordered region spans residues 15–35 (PPGSPEPPEPPGLAQLSPGSP). 4 TPR repeats span residues 39-72 (PDLLYADGLRAYSAGAWAPAVALLREALRSRAAL), 152-185 (REPYNYLQRAYYQLKKLDLAASAAHTFFVANPTH), 214-247 (YWAAYDTGLELLEQREAALALPQLEEALQGSLAH), and 312-345 (LSQLRRLHEAYAQVGNMSQAMENVLSVLLFYPED). N-linked (GlcNAc...) asparagine glycosylation is found at asparagine 327 and asparagine 458. A Fe2OG dioxygenase domain is found at 557–671 (THLVCRSAIE…RCALALWHTW (115 aa)). Positions 580, 582, and 652 each coordinate Fe cation. Arginine 662 is an active-site residue. Residues 674–703 (EHSEQEWTEAKELLQEEEEEEEEEDILSRD) are a coiled coil. A compositionally biased stretch (basic and acidic residues) spans 676–687 (SEQEWTEAKELL). Residues 676-732 (SEQEWTEAKELLQEEEEEEEEEDILSRDPSPEPPSHKLQRVQEKAGKPRRVRVREEL) form a disordered region. Residues 688 to 698 (QEEEEEEEEED) show a composition bias toward acidic residues. Residues 722 to 732 (KPRRVRVREEL) are compositionally biased toward basic residues. Positions 729–732 (REEL) match the Prevents secretion from ER motif.

It belongs to the leprecan family. In terms of assembly, identified in a complex with PLOD1 and P3H4. Requires Fe cation as cofactor. L-ascorbate is required as a cofactor. As to expression, detected in kidney (at protein level).

It is found in the endoplasmic reticulum. It catalyses the reaction L-prolyl-[collagen] + 2-oxoglutarate + O2 = trans-3-hydroxy-L-prolyl-[collagen] + succinate + CO2. Functionally, part of a complex composed of PLOD1, P3H3 and P3H4 that catalyzes hydroxylation of lysine residues in collagen alpha chains and is required for normal assembly and cross-linkling of collagen fibrils. Required for normal hydroxylation of lysine residues in type I collagen chains in skin, bone, tendon, aorta and cornea. Required for normal skin stability via its role in hydroxylation of lysine residues in collagen alpha chains and in collagen fibril assembly. Apparently not required for normal prolyl 3-hydroxylation on collagen chains, possibly because it functions redundantly with other prolyl 3-hydroxylases. This chain is Prolyl 3-hydroxylase 3, found in Mus musculus (Mouse).